Reading from the N-terminus, the 141-residue chain is MVLMVNLGFVIAEFNRDITYMMEKVAEEHAEFLGATVKYKIVVPGVFDMPLAVKKLLEKDDVDAVVTIGCVIEGETEHDEIVVHNAARKIADLALQYDKPVTLGISGPGMTRLQAQERVDYGKRAVEAAVKMVKRLKALEE.

Residues Phe14, 46–48, and 70–72 contribute to the 5-amino-6-(D-ribitylamino)uracil site; these read VFD and CVI. 75–76 is a (2S)-2-hydroxy-3-oxobutyl phosphate binding site; it reads ET. His78 functions as the Proton donor in the catalytic mechanism. Leu103 is a binding site for 5-amino-6-(D-ribitylamino)uracil. Arg118 is a (2S)-2-hydroxy-3-oxobutyl phosphate binding site.

Forms an icosahedral capsid composed of 60 subunits, arranged as a dodecamer of pentamers.

It catalyses the reaction (2S)-2-hydroxy-3-oxobutyl phosphate + 5-amino-6-(D-ribitylamino)uracil = 6,7-dimethyl-8-(1-D-ribityl)lumazine + phosphate + 2 H2O + H(+). The protein operates within cofactor biosynthesis; riboflavin biosynthesis; riboflavin from 2-hydroxy-3-oxobutyl phosphate and 5-amino-6-(D-ribitylamino)uracil: step 1/2. Catalyzes the formation of 6,7-dimethyl-8-ribityllumazine by condensation of 5-amino-6-(D-ribitylamino)uracil with 3,4-dihydroxy-2-butanone 4-phosphate. This is the penultimate step in the biosynthesis of riboflavin. The chain is 6,7-dimethyl-8-ribityllumazine synthase (ribH) from Methanocaldococcus jannaschii (strain ATCC 43067 / DSM 2661 / JAL-1 / JCM 10045 / NBRC 100440) (Methanococcus jannaschii).